The chain runs to 877 residues: DNA polymerase I (877 aa).

In terms of domain architecture, 5'-3' exonuclease spans 180 to 272; the sequence is TPSQFIDLKA…GLEDTLLKEK (93 aa). In terms of domain architecture, 3'-5' exonuclease spans 312–468; it reads FEIVTDKSSV…AKEKMMAELI (157 aa).

Belongs to the DNA polymerase type-A family. As to quaternary structure, single-chain monomer with multiple functions.

It carries out the reaction DNA(n) + a 2'-deoxyribonucleoside 5'-triphosphate = DNA(n+1) + diphosphate. Functionally, in addition to polymerase activity, this DNA polymerase exhibits 3'-5' and 5'-3' exonuclease activity. The sequence is that of DNA polymerase I (polA) from Lactococcus lactis subsp. cremoris (strain MG1363).